We begin with the raw amino-acid sequence, 45 residues long: Mu-conotoxin-like Cal 12.1.2e (45 aa).

Intrachain disulfides connect Cys-3–Cys-16, Cys-11–Cys-28, Cys-18–Cys-33, and Cys-27–Cys-39. A 6'-bromotryptophan modification is found at Trp-17. Position 23 is a 4-hydroxyproline (Pro-23). Trp-38 is subject to 6'-bromotryptophan. Pro-40 carries the post-translational modification 4-hydroxyproline.

In terms of tissue distribution, expressed by the venom duct.

The protein localises to the secreted. Mu-conotoxins block voltage-gated sodium channels. This toxin reversibly blocks voltage-gated sodium channel in cephalopods, with no alteration in the voltage dependence of sodium conductance or on the kinetics of inactivation. The polypeptide is Mu-conotoxin-like Cal 12.1.2e (Californiconus californicus (California cone)).